A 336-amino-acid chain; its full sequence is tRNA N6-adenosine threonylcarbamoyltransferase (336 aa).

Fe cation contacts are provided by His-114 and His-118. Substrate-binding positions include 136-140, Asp-169, Gly-182, Asp-186, and Asn-275; that span reads LVSGG. Asp-302 provides a ligand contact to Fe cation.

It belongs to the KAE1 / TsaD family. Fe(2+) serves as cofactor.

It localises to the cytoplasm. The enzyme catalyses L-threonylcarbamoyladenylate + adenosine(37) in tRNA = N(6)-L-threonylcarbamoyladenosine(37) in tRNA + AMP + H(+). Its function is as follows. Required for the formation of a threonylcarbamoyl group on adenosine at position 37 (t(6)A37) in tRNAs that read codons beginning with adenine. Is involved in the transfer of the threonylcarbamoyl moiety of threonylcarbamoyl-AMP (TC-AMP) to the N6 group of A37, together with TsaE and TsaB. TsaD likely plays a direct catalytic role in this reaction. This chain is tRNA N6-adenosine threonylcarbamoyltransferase, found in Streptococcus agalactiae serotype III (strain NEM316).